We begin with the raw amino-acid sequence, 200 residues long: TATA-box-binding protein (200 aa).

2 tandem repeats follow at residues 25–101 and 115–192.

The protein belongs to the TBP family. In terms of assembly, belongs to the TFIID complex together with the TBP-associated factors (TAFs). Binds DNA as monomer.

It localises to the nucleus. In terms of biological role, general transcription factor that functions at the core of the DNA-binding multiprotein factor TFIID. Binding of TFIID to the TATA box is the initial transcriptional step of the pre-initiation complex (PIC), playing a role in the activation of eukaryotic genes transcribed by RNA polymerase II. The protein is TATA-box-binding protein of Nicotiana tabacum (Common tobacco).